Consider the following 62-residue polypeptide: Photosystem II reaction center protein Z (62 aa).

The next 2 membrane-spanning stretches (helical) occupy residues 8–28 and 41–61; these read AVFA…VVFA and FSGT…NSLI.

This sequence belongs to the PsbZ family. As to quaternary structure, PSII is composed of 1 copy each of membrane proteins PsbA, PsbB, PsbC, PsbD, PsbE, PsbF, PsbH, PsbI, PsbJ, PsbK, PsbL, PsbM, PsbT, PsbY, PsbZ, Psb30/Ycf12, at least 3 peripheral proteins of the oxygen-evolving complex and a large number of cofactors. It forms dimeric complexes.

The protein localises to the plastid. It is found in the chloroplast thylakoid membrane. In terms of biological role, may control the interaction of photosystem II (PSII) cores with the light-harvesting antenna, regulates electron flow through the 2 photosystem reaction centers. PSII is a light-driven water plastoquinone oxidoreductase, using light energy to abstract electrons from H(2)O, generating a proton gradient subsequently used for ATP formation. This Cucumis sativus (Cucumber) protein is Photosystem II reaction center protein Z.